A 311-amino-acid chain; its full sequence is Bifunctional protein FolD (311 aa).

NADP(+) contacts are provided by residues 184–186 (GAS), I209, and I250.

Belongs to the tetrahydrofolate dehydrogenase/cyclohydrolase family. As to quaternary structure, homodimer.

It carries out the reaction (6R)-5,10-methylene-5,6,7,8-tetrahydrofolate + NADP(+) = (6R)-5,10-methenyltetrahydrofolate + NADPH. The catalysed reaction is (6R)-5,10-methenyltetrahydrofolate + H2O = (6R)-10-formyltetrahydrofolate + H(+). It participates in one-carbon metabolism; tetrahydrofolate interconversion. Functionally, catalyzes the oxidation of 5,10-methylenetetrahydrofolate to 5,10-methenyltetrahydrofolate and then the hydrolysis of 5,10-methenyltetrahydrofolate to 10-formyltetrahydrofolate. In Gluconacetobacter diazotrophicus (strain ATCC 49037 / DSM 5601 / CCUG 37298 / CIP 103539 / LMG 7603 / PAl5), this protein is Bifunctional protein FolD.